We begin with the raw amino-acid sequence, 586 residues long: uncharacterized protein (586 aa).

This is an uncharacterized protein from Saccharomyces cerevisiae (strain ATCC 204508 / S288c) (Baker's yeast).